Here is a 208-residue protein sequence, read N- to C-terminus: Large ribosomal subunit protein uL4 (208 aa).

The disordered stretch occupies residues 45–85 (RQGTHKAKTRAQVRGGGRKPYRQKGTGNARQGSTRSPLMIG). Residues 46-66 (QGTHKAKTRAQVRGGGRKPYR) show a composition bias toward basic residues. Residues 69–80 (GTGNARQGSTRS) are compositionally biased toward polar residues.

Belongs to the universal ribosomal protein uL4 family. As to quaternary structure, part of the 50S ribosomal subunit.

Its function is as follows. One of the primary rRNA binding proteins, this protein initially binds near the 5'-end of the 23S rRNA. It is important during the early stages of 50S assembly. It makes multiple contacts with different domains of the 23S rRNA in the assembled 50S subunit and ribosome. Forms part of the polypeptide exit tunnel. The chain is Large ribosomal subunit protein uL4 from Chlorobium phaeobacteroides (strain DSM 266 / SMG 266 / 2430).